Here is a 186-residue protein sequence, read N- to C-terminus: Protein TRL14 (186 aa).

Asparagine 24, asparagine 64, and asparagine 72 each carry an N-linked (GlcNAc...) asparagine; by host glycan. Residues 143–163 form a helical membrane-spanning segment; that stretch reads HAVWAGVVVSVALIALYMGSH.

The protein belongs to the RL11 family.

Its subcellular location is the virion membrane. This chain is Protein TRL14, found in Human cytomegalovirus (strain AD169) (HHV-5).